The chain runs to 180 residues: ATP synthase subunit delta (180 aa).

It belongs to the ATPase delta chain family. In terms of assembly, F-type ATPases have 2 components, F(1) - the catalytic core - and F(0) - the membrane proton channel. F(1) has five subunits: alpha(3), beta(3), gamma(1), delta(1), epsilon(1). F(0) has three main subunits: a(1), b(2) and c(10-14). The alpha and beta chains form an alternating ring which encloses part of the gamma chain. F(1) is attached to F(0) by a central stalk formed by the gamma and epsilon chains, while a peripheral stalk is formed by the delta and b chains.

It is found in the cell membrane. Its function is as follows. F(1)F(0) ATP synthase produces ATP from ADP in the presence of a proton or sodium gradient. F-type ATPases consist of two structural domains, F(1) containing the extramembraneous catalytic core and F(0) containing the membrane proton channel, linked together by a central stalk and a peripheral stalk. During catalysis, ATP synthesis in the catalytic domain of F(1) is coupled via a rotary mechanism of the central stalk subunits to proton translocation. This protein is part of the stalk that links CF(0) to CF(1). It either transmits conformational changes from CF(0) to CF(1) or is implicated in proton conduction. The polypeptide is ATP synthase subunit delta (Pediococcus pentosaceus (strain ATCC 25745 / CCUG 21536 / LMG 10740 / 183-1w)).